A 104-amino-acid polypeptide reads, in one-letter code: uncharacterized protein (104 aa).

This is an uncharacterized protein from Pasteurella multocida (strain Pm70).